The primary structure comprises 635 residues: Early transcription factor 70 kDa subunit (635 aa).

One can recognise a Helicase ATP-binding domain in the interval 32-185; that stretch reads RSIIDENKSV…SNIISLMSDE (154 aa). 45 to 52 serves as a coordination point for ATP; that stretch reads HIMGSGKT. A DEXH box motif is present at residues 135 to 138; the sequence is DEAH. In terms of domain architecture, Helicase C-terminal spans 326–505; the sequence is KFKYFIGKIT…TLPFDIKKLL (180 aa).

Belongs to the helicase family. VETF subfamily. In terms of assembly, heterodimer of a 70 kDa and a 82 kDa subunit.

The protein localises to the virion. In terms of biological role, acts with RNA polymerase to initiate transcription from early gene promoters. A DNA-dependent ATPase activity is associated with VETF. The sequence is that of Early transcription factor 70 kDa subunit (VETFS) from Erythrocebus patas (Red guenon).